Consider the following 83-residue polypeptide: Three-finger toxin W-IV (83 aa).

A signal peptide spans 1–21; it reads MKTLLLTLVVVTIVCLDLGHT. 4 cysteine pairs are disulfide-bonded: C24-C45, C38-C62, C64-C75, and C76-C81.

Belongs to the three-finger toxin family. Short-chain subfamily. Type I alpha-neurotoxin sub-subfamily. In terms of tissue distribution, expressed by the venom gland.

The protein localises to the secreted. Functionally, binds to muscle nicotinic acetylcholine receptor (nAChR) and inhibit acetylcholine from binding to the receptor, thereby impairing neuromuscular transmission. The chain is Three-finger toxin W-IV from Walterinnesia aegyptia (Desert black snake).